Reading from the N-terminus, the 207-residue chain is Sodium/potassium-transporting ATPase subunit beta-1-interacting protein 1 (207 aa).

The next 3 helical transmembrane spans lie at 2-22, 35-55, and 62-82; these read GKCS…VAAL, APIL…FGTV, and LILY…IICF. N-linked (GlcNAc...) asparagine glycosylation is present at asparagine 100. The helical transmembrane segment at 147–167 threads the bilayer; it reads ALSSALQIFLALFGFVFACYV.

Belongs to the NKAIN family. In terms of assembly, interacts with ATP1B1 C-terminus. As to expression, detected in the brain only and specifically in neurons. Expressed in multiple regions such as cerebral cortex, thalamus, hippocampus, olfactory bulb and brainstem as well as in cerebellum with high expression in granular cell layer.

It is found in the cell membrane. This is Sodium/potassium-transporting ATPase subunit beta-1-interacting protein 1 (Nkain1) from Mus musculus (Mouse).